A 459-amino-acid chain; its full sequence is Neuronal acetylcholine receptor subunit beta-2 (459 aa).

At 1–203 the chain is on the extracellular side; it reads LRSDFLLGPE…ITYDFVIKRK (203 aa). N-linked (GlcNAc...) asparagine glycosylation is found at Asn21 and Asn138. Cysteines 125 and 139 form a disulfide. The chain crosses the membrane as a helical span at residues 204–228; sequence PLFYTINLIIPCVLITSLAILVFYL. The Cytoplasmic segment spans residues 229–235; sequence PSDCGEK. The chain crosses the membrane as a helical span at residues 236 to 254; the sequence is VTLCMSVLLALTVFLLLIS. Over 255–269 the chain is Extracellular; that stretch reads KIVPPTSLAVPLIGK. Residues 270–291 traverse the membrane as a helical segment; it reads YLMFTMVLVTFSIVTSVCVLNV. Over 292–421 the chain is Cytoplasmic; the sequence is HHRSPSTHYM…WKYVAMVIDR (130 aa). Residues 422–440 traverse the membrane as a helical segment; that stretch reads LFLWIFILVCVVGTLGLFV.

Belongs to the ligand-gated ion channel (TC 1.A.9) family. Acetylcholine receptor (TC 1.A.9.1) subfamily. Beta-2/CHRNB2 sub-subfamily. Neuronal AChR is a heteropentamer composed of two different types of subunits: alpha and beta. CHRNB2/Beta-2 subunit can be combined to CHRNA2/alpha-2, CHRNA3/alpha-3 or CHRNA4/alpha-4, CHRNA5/alpha-5, CHRNA6/alpha-6 and CHRNB3/beta-3 to give rise to functional receptors.

The protein resides in the synaptic cell membrane. Its subcellular location is the cell membrane. The catalysed reaction is Ca(2+)(in) = Ca(2+)(out). The enzyme catalyses K(+)(in) = K(+)(out). It catalyses the reaction Na(+)(in) = Na(+)(out). With respect to regulation, activated by a myriad of ligands such as acetylcholine, cytisine, nicotine, choline and epibatidine. nAChR activity is inhibited by the antagonist alpha-conotoxins BuIA, PnIA, PnIC, GID and MII, small disulfide-constrained peptides from cone snails. Its function is as follows. Component of neuronal acetylcholine receptors (nAChRs) that function as pentameric, ligand-gated cation channels with high calcium permeability among other activities. nAChRs are excitatory neurotrasnmitter receptors formed by a collection of nAChR subunits known to mediate synaptic transmission in the nervous system and the neuromuscular junction. Each nAchR subunit confers differential attributes to channel properties, including activation, deactivation and desensitization kinetics, pH sensitivity, cation permeability, and binding to allosteric modulators. CHRNB2 forms heteropentameric neuronal acetylcholine receptors with CHRNA2, CHRNA3, CHRNA4 and CHRNA6, as well as CHRNA5 and CHRNB3 as accesory subunits. This chain is Neuronal acetylcholine receptor subunit beta-2 (chrnb2), found in Carassius auratus (Goldfish).